Consider the following 380-residue polypeptide: Putative zinc finger protein C02F5.12 (380 aa).

Residues 137 to 187 are disordered; the sequence is NLDIPGTSSDIPSDPSSALKVPKKEVLDESEEILDQTSGSSSFSLNDSEQA. 2 stretches are compositionally biased toward polar residues: residues 142–152 and 171–187; these read GTSSDIPSDPS and DQTS…SEQA. The C2H2-type zinc-finger motif lies at 271–294; it reads IPCKLCGFECTNVRRMRSHYAKAH.

The protein resides in the nucleus. This Caenorhabditis elegans protein is Putative zinc finger protein C02F5.12.